A 437-amino-acid chain; its full sequence is ATP-dependent protease ATPase subunit HslU (437 aa).

Residues valine 18, 60–65, aspartate 250, glutamate 315, and arginine 387 contribute to the ATP site; that span reads GCGKTE.

This sequence belongs to the ClpX chaperone family. HslU subfamily. In terms of assembly, a double ring-shaped homohexamer of HslV is capped on each side by a ring-shaped HslU homohexamer. The assembly of the HslU/HslV complex is dependent on binding of ATP.

Its subcellular location is the cytoplasm. Functionally, ATPase subunit of a proteasome-like degradation complex; this subunit has chaperone activity. The binding of ATP and its subsequent hydrolysis by HslU are essential for unfolding of protein substrates subsequently hydrolyzed by HslV. HslU recognizes the N-terminal part of its protein substrates and unfolds these before they are guided to HslV for hydrolysis. The sequence is that of ATP-dependent protease ATPase subunit HslU from Methylobacterium radiotolerans (strain ATCC 27329 / DSM 1819 / JCM 2831 / NBRC 15690 / NCIMB 10815 / 0-1).